The sequence spans 216 residues: Adenylate kinase (216 aa).

10–15 contributes to the ATP binding site; the sequence is GAGKGT. The interval 30–59 is NMP; sequence STGDIFRKNIKEGTELGKKAKEYMDQGLLV. Residues Thr-31, Arg-36, 57-59, 85-88, and Gln-92 contribute to the AMP site; these read LLV and GFPR. Residues 126 to 163 form an LID region; that stretch reads GRRICKSCGATYHVEFNPPKVEGVCDVCQGELYQRADD. Position 127 (Arg-127) interacts with ATP. Residues Cys-130 and Cys-133 each contribute to the Zn(2+) site. 136–137 contributes to the ATP binding site; sequence TY. Positions 150 and 153 each coordinate Zn(2+). Residues Arg-160 and Arg-171 each coordinate AMP. ATP is bound at residue Gln-199.

It belongs to the adenylate kinase family. Monomer.

The protein localises to the cytoplasm. It catalyses the reaction AMP + ATP = 2 ADP. The protein operates within purine metabolism; AMP biosynthesis via salvage pathway; AMP from ADP: step 1/1. Catalyzes the reversible transfer of the terminal phosphate group between ATP and AMP. Plays an important role in cellular energy homeostasis and in adenine nucleotide metabolism. The polypeptide is Adenylate kinase (Clostridioides difficile (strain 630) (Peptoclostridium difficile)).